A 117-amino-acid chain; its full sequence is Putative iron-sulfur cluster insertion protein ErpA (117 aa).

Iron-sulfur cluster contacts are provided by C45, C109, and C111.

The protein belongs to the HesB/IscA family. In terms of assembly, homodimer. Iron-sulfur cluster is required as a cofactor.

Functionally, required for insertion of 4Fe-4S clusters. The polypeptide is Putative iron-sulfur cluster insertion protein ErpA (Methylobacillus flagellatus (strain ATCC 51484 / DSM 6875 / VKM B-1610 / KT)).